The chain runs to 362 residues: Biotin synthase (362 aa).

A Radical SAM core domain is found at 39–267 (NVVQVSTLLS…ETQVRLSAGR (229 aa)). [4Fe-4S] cluster-binding residues include Cys54, Cys58, and Cys61. [2Fe-2S] cluster-binding residues include Cys98, Cys130, Cys190, and Arg262. Residues 317–362 (PFTKVSQPTTVEAKDSRYESLGEKPKWSRPSHTIEKNLELSGKGKN) form a disordered region. The segment covering 328–354 (EAKDSRYESLGEKPKWSRPSHTIEKNL) has biased composition (basic and acidic residues).

Belongs to the radical SAM superfamily. Biotin synthase family. As to quaternary structure, homodimer. [4Fe-4S] cluster serves as cofactor. It depends on [2Fe-2S] cluster as a cofactor.

The enzyme catalyses (4R,5S)-dethiobiotin + (sulfur carrier)-SH + 2 reduced [2Fe-2S]-[ferredoxin] + 2 S-adenosyl-L-methionine = (sulfur carrier)-H + biotin + 2 5'-deoxyadenosine + 2 L-methionine + 2 oxidized [2Fe-2S]-[ferredoxin]. The protein operates within cofactor biosynthesis; biotin biosynthesis; biotin from 7,8-diaminononanoate: step 2/2. In terms of biological role, catalyzes the conversion of dethiobiotin (DTB) to biotin by the insertion of a sulfur atom into dethiobiotin via a radical-based mechanism. This is Biotin synthase from Flavobacterium psychrophilum (strain ATCC 49511 / DSM 21280 / CIP 103535 / JIP02/86).